Here is a 185-residue protein sequence, read N- to C-terminus: Elongation factor P (185 aa).

The protein belongs to the elongation factor P family.

It localises to the cytoplasm. It participates in protein biosynthesis; polypeptide chain elongation. Involved in peptide bond synthesis. Stimulates efficient translation and peptide-bond synthesis on native or reconstituted 70S ribosomes in vitro. Probably functions indirectly by altering the affinity of the ribosome for aminoacyl-tRNA, thus increasing their reactivity as acceptors for peptidyl transferase. This is Elongation factor P from Staphylococcus saprophyticus subsp. saprophyticus (strain ATCC 15305 / DSM 20229 / NCIMB 8711 / NCTC 7292 / S-41).